Reading from the N-terminus, the 154-residue chain is Lipoprotein signal peptidase (154 aa).

A run of 2 helical transmembrane segments spans residues 55-75 and 84-104; these read GHMW…IYIM and LFSI…IDRI. Residues Asp111 and Asp129 contribute to the active site. Residues 124-144 form a helical membrane-spanning segment; the sequence is IFNVADAALSVGVVLMLVYVF.

This sequence belongs to the peptidase A8 family.

The protein resides in the cell membrane. The catalysed reaction is Release of signal peptides from bacterial membrane prolipoproteins. Hydrolyzes -Xaa-Yaa-Zaa-|-(S,diacylglyceryl)Cys-, in which Xaa is hydrophobic (preferably Leu), and Yaa (Ala or Ser) and Zaa (Gly or Ala) have small, neutral side chains.. It functions in the pathway protein modification; lipoprotein biosynthesis (signal peptide cleavage). This protein specifically catalyzes the removal of signal peptides from prolipoproteins. The protein is Lipoprotein signal peptidase of Listeria innocua serovar 6a (strain ATCC BAA-680 / CLIP 11262).